Here is a 522-residue protein sequence, read N- to C-terminus: MNLGVVIKIKRKKAIIVTETGEFKAVNARNGMFLGQKILFDQQDVIENNRNGIGLAYSAAIAGMVAVFVFMFTYFGLHNFNGTFAYVDVDINPSVEFAVNRDGIVVNAEPLNDDGRKVLEELIYKDALLEDVILDLVDKSRKYGFIEDNDRKNIILISAALNSDEQEQRNDFEKKLVDNLMPELENLDVNIEMRFVIASKEQRKKAQENKVSMGKYMIYEMARRQGEKLTLESIMSETLENLLLGQDFGVIETEKTPVNTPVKSTATPTKALAAEITPTKTPEQVVMTPANTPAKPTAAPTKAPAAVAVTSAKTPERATTVPVNTPVKPTDAPTKSPATATATATRAPVKATATPAKTLKPSDTPVKTPDGEQSVKVRFYNNNTLSETGVIYMRINVINTGNAPLDLSDLKLRYYYTIDSESEQRFNCDWSSIGAHNVTGSFGKVNPSRNGADTYVEIGFTKEAGMLQPGESVELNARFSKTDNTQYNKADDYSFNSHYYEYVDWDRITAYISGILKWGREP.

The Cytoplasmic portion of the chain corresponds to 1–51 (MNLGVVIKIKRKKAIIVTETGEFKAVNARNGMFLGQKILFDQQDVIENNRN). The region spanning 2-49 (NLGVVIKIKRKKAIIVTETGEFKAVNARNGMFLGQKILFDQQDVIENN) is the RsgI N-terminal anti-sigma domain. Residues 52 to 72 (GIGLAYSAAIAGMVAVFVFMF) form a helical membrane-spanning segment. Over 73–522 (TYFGLHNFNG…SGILKWGREP (450 aa)) the chain is Extracellular. Residues 311 to 361 (SAKTPERATTVPVNTPVKPTDAPTKSPATATATATRAPVKATATPAKTLKP) are compositionally biased toward low complexity. Positions 311–371 (SAKTPERATT…SDTPVKTPDG (61 aa)) are disordered. Positions 371 to 522 (GEQSVKVRFY…SGILKWGREP (152 aa)) constitute a CBM3 domain.

Interacts (via RsgI N-terminal anti-sigma domain) with SigI4.

It localises to the cell membrane. In terms of biological role, anti-sigma factor for SigI4. Negatively regulates SigI4 activity through direct interaction. Binding of the polysaccharide substrate to the extracellular C-terminal sensing domain of RsgI4 may induce a conformational change in its N-terminal cytoplasmic region, leading to the release and activation of SigI4. In Acetivibrio thermocellus (strain ATCC 27405 / DSM 1237 / JCM 9322 / NBRC 103400 / NCIMB 10682 / NRRL B-4536 / VPI 7372) (Clostridium thermocellum), this protein is Anti-sigma-I factor RsgI4.